We begin with the raw amino-acid sequence, 477 residues long: Bifunctional protein HldE (477 aa).

Residues Met1–Thr318 form a ribokinase region. An ATP-binding site is contributed by Asn195–Glu198. Asp264 is a catalytic residue. A cytidylyltransferase region spans residues Met344–Lys477.

It in the N-terminal section; belongs to the carbohydrate kinase PfkB family. The protein in the C-terminal section; belongs to the cytidylyltransferase family. As to quaternary structure, homodimer.

It catalyses the reaction D-glycero-beta-D-manno-heptose 7-phosphate + ATP = D-glycero-beta-D-manno-heptose 1,7-bisphosphate + ADP + H(+). It carries out the reaction D-glycero-beta-D-manno-heptose 1-phosphate + ATP + H(+) = ADP-D-glycero-beta-D-manno-heptose + diphosphate. It functions in the pathway nucleotide-sugar biosynthesis; ADP-L-glycero-beta-D-manno-heptose biosynthesis; ADP-L-glycero-beta-D-manno-heptose from D-glycero-beta-D-manno-heptose 7-phosphate: step 1/4. The protein operates within nucleotide-sugar biosynthesis; ADP-L-glycero-beta-D-manno-heptose biosynthesis; ADP-L-glycero-beta-D-manno-heptose from D-glycero-beta-D-manno-heptose 7-phosphate: step 3/4. In terms of biological role, catalyzes the phosphorylation of D-glycero-D-manno-heptose 7-phosphate at the C-1 position to selectively form D-glycero-beta-D-manno-heptose-1,7-bisphosphate. Functionally, catalyzes the ADP transfer from ATP to D-glycero-beta-D-manno-heptose 1-phosphate, yielding ADP-D-glycero-beta-D-manno-heptose. This chain is Bifunctional protein HldE, found in Salmonella agona (strain SL483).